The following is a 349-amino-acid chain: MSVTADGRRMLRIEAKNAETPIESKPRWIRTTAKVGPEYRDIKNRVKGAGLHTVCQEAGCPNINECWEDREATFLIGGDTCSRRCDFCQIKSGRPSPLDMDEPRRVAENVREMGLRYATITGVTRDDLDDEGAWLYAEVVKKIHELNPNTGVENLTPDFSNRPELLKVVFDSQPEVFAHNLETVPRIFKRIRPAFKYDRSLEVIQAAHDYGLVTKSNLILGMGEKKEEVRAAIKDLADAGTDILTITQYLRPSSMHHPIERWVKPEEFMEHSDAAYELGIKAVMSGPLVRSSYRAGRLYAQAKQARGEAIPENLKHLEETLDSTTSQEASTLLERYGASEDTPVTASRR.

The [4Fe-4S] cluster site is built by Cys-55, Cys-60, Cys-66, Cys-81, Cys-85, Cys-88, and Ser-292. Residues 67–281 (WEDREATFLI…SDAAYELGIK (215 aa)) form the Radical SAM core domain. A disordered region spans residues 321–349 (LDSTTSQEASTLLERYGASEDTPVTASRR).

Belongs to the radical SAM superfamily. Lipoyl synthase family. It depends on [4Fe-4S] cluster as a cofactor.

Its subcellular location is the cytoplasm. The enzyme catalyses [[Fe-S] cluster scaffold protein carrying a second [4Fe-4S](2+) cluster] + N(6)-octanoyl-L-lysyl-[protein] + 2 oxidized [2Fe-2S]-[ferredoxin] + 2 S-adenosyl-L-methionine + 4 H(+) = [[Fe-S] cluster scaffold protein] + N(6)-[(R)-dihydrolipoyl]-L-lysyl-[protein] + 4 Fe(3+) + 2 hydrogen sulfide + 2 5'-deoxyadenosine + 2 L-methionine + 2 reduced [2Fe-2S]-[ferredoxin]. It functions in the pathway protein modification; protein lipoylation via endogenous pathway; protein N(6)-(lipoyl)lysine from octanoyl-[acyl-carrier-protein]: step 2/2. Catalyzes the radical-mediated insertion of two sulfur atoms into the C-6 and C-8 positions of the octanoyl moiety bound to the lipoyl domains of lipoate-dependent enzymes, thereby converting the octanoylated domains into lipoylated derivatives. This chain is Lipoyl synthase, found in Corynebacterium jeikeium (strain K411).